Consider the following 268-residue polypeptide: Indole-3-glycerol phosphate synthase (268 aa).

Belongs to the TrpC family.

The catalysed reaction is 1-(2-carboxyphenylamino)-1-deoxy-D-ribulose 5-phosphate + H(+) = (1S,2R)-1-C-(indol-3-yl)glycerol 3-phosphate + CO2 + H2O. The protein operates within amino-acid biosynthesis; L-tryptophan biosynthesis; L-tryptophan from chorismate: step 4/5. The sequence is that of Indole-3-glycerol phosphate synthase from Parafrankia sp. (strain EAN1pec).